Here is a 327-residue protein sequence, read N- to C-terminus: MSLKVFDYEDVQLIPNKCIVNSRSECDTTVILGKHAFKMPIVPANMQTIINESIAEFLAENGYFYIMHRFDGAARIPFVKKMKKRQWISSISVGVKKEECLFVEELAKQGLAPDYITIDIAHGHSNSVIEMIQRIKTHLPETFVIAGNVGTPEAVRELENAGADATKVGIGPGKVCITKIKTGFGTGGWQLAALRWCAKAARKPIIADGGIRTHGDIVKSIRFGATMVMIGSLFAGHEESSGETKIENGIAYKEYFGSASEFQKGEKKNIEGKKIWIQHKGSLKDTLVEMHQDLQSSISYAGGRDLEAIRKVDYVIVKNSIFNGDAI.

Residue C176 is the Thioimidate intermediate of the active site. 205 to 228 serves as a coordination point for NADP(+); the sequence is IIADGGIRTHGDIVKSIRFGATMV.

It belongs to the IMPDH/GMPR family. GuaC type 2 subfamily.

It carries out the reaction IMP + NH4(+) + NADP(+) = GMP + NADPH + 2 H(+). Its function is as follows. Catalyzes the irreversible NADPH-dependent deamination of GMP to IMP. It functions in the conversion of nucleobase, nucleoside and nucleotide derivatives of G to A nucleotides, and in maintaining the intracellular balance of A and G nucleotides. The protein is GMP reductase of Helicobacter pylori (strain ATCC 700392 / 26695) (Campylobacter pylori).